A 690-amino-acid polypeptide reads, in one-letter code: Hypersensitivity response secretion protein HrcV (690 aa).

The next 6 membrane-spanning stretches (helical) occupy residues 14–36, 48–72, 104–128, 196–216, 229–253, and 291–315; these read IGIA…TMLI, VVLL…LLLF, LVVG…FIVI, AIAG…IGIT, FAVL…AAGV, and LLMG…LIFV.

This sequence belongs to the FHIPEP (flagella/HR/invasion proteins export pore) family.

Its subcellular location is the cell inner membrane. Its function is as follows. Involved in the secretion of PopA, a proteinaceous elicitor of the hypersensitivity response in plants. This Ralstonia nicotianae (strain ATCC BAA-1114 / GMI1000) (Ralstonia solanacearum) protein is Hypersensitivity response secretion protein HrcV (hrcV).